A 96-amino-acid chain; its full sequence is Non-specific lipid-transfer protein 2 (96 aa).

The signal sequence occupies residues Met-1–Gly-27. Disulfide bonds link Cys-30/Cys-62, Cys-38/Cys-52, Cys-53/Cys-88, and Cys-64/Cys-95.

This sequence belongs to the plant LTP family. B11E subfamily.

Its function is as follows. Transfer lipids across membranes. May play a role in plant defense or in the biosynthesis of cuticle layers. In Oryza sativa subsp. indica (Rice), this protein is Non-specific lipid-transfer protein 2 (LTP-2).